A 120-amino-acid chain; its full sequence is Ribonuclease P protein component 4 (120 aa).

4 residues coordinate Zn(2+): C68, C71, C97, and C100.

Belongs to the eukaryotic/archaeal RNase P protein component 4 family. In terms of assembly, consists of a catalytic RNA component and at least 5 protein subunits. Forms a heterodimeric subcomplex with Rnp1. Reconstituted enzyme missing individual protein subunits is suboptimally active, showing each subunit contributes to optimization of activity. The cofactor is Zn(2+).

It is found in the cytoplasm. It catalyses the reaction Endonucleolytic cleavage of RNA, removing 5'-extranucleotides from tRNA precursor.. Functionally, part of ribonuclease P, a protein complex that generates mature tRNA molecules by cleaving their 5'-ends. Binds RNase P RNA. The protein is Ribonuclease P protein component 4 of Pyrococcus horikoshii (strain ATCC 700860 / DSM 12428 / JCM 9974 / NBRC 100139 / OT-3).